We begin with the raw amino-acid sequence, 361 residues long: tRNA-specific 2-thiouridylase MnmA (361 aa).

ATP contacts are provided by residues 8–15 (GMSGGVDS) and M34. An interaction with target base in tRNA region spans residues 94 to 96 (NPD). The Nucleophile role is filled by C99. C99 and C195 are oxidised to a cystine. ATP is bound at residue G123. Residues 145 to 147 (KDQ) form an interaction with tRNA region. Residue C195 is the Cysteine persulfide intermediate of the active site. Residues 307 to 308 (RY) are interaction with tRNA.

It belongs to the MnmA/TRMU family.

The protein localises to the cytoplasm. The enzyme catalyses S-sulfanyl-L-cysteinyl-[protein] + uridine(34) in tRNA + AH2 + ATP = 2-thiouridine(34) in tRNA + L-cysteinyl-[protein] + A + AMP + diphosphate + H(+). Its function is as follows. Catalyzes the 2-thiolation of uridine at the wobble position (U34) of tRNA, leading to the formation of s(2)U34. The protein is tRNA-specific 2-thiouridylase MnmA of Legionella pneumophila (strain Lens).